The chain runs to 255 residues: Glutamate racemase (255 aa).

Residues 7 to 8 (DS) and 39 to 40 (YG) each bind substrate. Cys70 (proton donor/acceptor) is an active-site residue. 71-72 (NT) contributes to the substrate binding site. The active-site Proton donor/acceptor is the Cys181. Position 182–183 (182–183 (TH)) interacts with substrate.

Belongs to the aspartate/glutamate racemases family.

It carries out the reaction L-glutamate = D-glutamate. It functions in the pathway cell wall biogenesis; peptidoglycan biosynthesis. Its function is as follows. Provides the (R)-glutamate required for cell wall biosynthesis. The sequence is that of Glutamate racemase from Helicobacter pylori (strain P12).